Here is a 198-residue protein sequence, read N- to C-terminus: Photosystem I assembly protein Ycf4 (198 aa).

The next 2 helical transmembrane spans lie at 35–57 and 70–92; these read WFYN…SSYI and IIFF…FSIN.

This sequence belongs to the Ycf4 family.

It localises to the plastid. It is found in the chloroplast thylakoid membrane. Functionally, seems to be required for the assembly of the photosystem I complex. This chain is Photosystem I assembly protein Ycf4, found in Euglena gracilis.